The following is a 113-amino-acid chain: UPF0122 protein LCA_0713 (113 aa).

It belongs to the UPF0122 family.

Its function is as follows. Might take part in the signal recognition particle (SRP) pathway. This is inferred from the conservation of its genetic proximity to ftsY/ffh. May be a regulatory protein. This Latilactobacillus sakei subsp. sakei (strain 23K) (Lactobacillus sakei subsp. sakei) protein is UPF0122 protein LCA_0713.